The primary structure comprises 279 residues: MKAATHLNGLTSHRTLKRIDSYGWLEAEDQVAQEEPLEIKFRIGSDKEKSAGIVMRTPVHDDWLAVGFLYSEGILHDRRWINGIEGVSIEGKAQDNIVTVNIDPRNGSFDPDYRERFVNSSCGICGKSTINGIFLRMGKIKRDNIKIDPGVIVSLPVIMKGMQQLFSKTGGIHAAALFSADGKPIVTAEDIGRHNAVDKVVGFSLIEGIDTSTLILQVSGRAGFEIVEKAAIAGIPVICSVSAPSSLAIEVCESLGLTLICFVRGSSFNVYTHAERIMI.

C122 serves as the catalytic Cysteine persulfide intermediate.

Belongs to the FdhD family.

It is found in the cytoplasm. Functionally, required for formate dehydrogenase (FDH) activity. Acts as a sulfur carrier protein that transfers sulfur from IscS to the molybdenum cofactor prior to its insertion into FDH. In Thermoplasma volcanium (strain ATCC 51530 / DSM 4299 / JCM 9571 / NBRC 15438 / GSS1), this protein is Sulfur carrier protein FdhD.